We begin with the raw amino-acid sequence, 288 residues long: tRNA pseudouridine synthase A (288 aa).

Asp58 (nucleophile) is an active-site residue. Substrate is bound at residue Tyr124.

Belongs to the tRNA pseudouridine synthase TruA family. Homodimer.

It catalyses the reaction uridine(38/39/40) in tRNA = pseudouridine(38/39/40) in tRNA. Its function is as follows. Formation of pseudouridine at positions 38, 39 and 40 in the anticodon stem and loop of transfer RNAs. This chain is tRNA pseudouridine synthase A, found in Corynebacterium diphtheriae (strain ATCC 700971 / NCTC 13129 / Biotype gravis).